The sequence spans 488 residues: Acetyl-coenzyme A carboxylase carboxyl transferase subunit beta, chloroplastic (488 aa).

The 268-residue stretch at 221 to 488 (LWIQCDNCYA…FFPLNKNEIK (268 aa)) folds into the CoA carboxyltransferase N-terminal domain. Zn(2+)-binding residues include cysteine 225, cysteine 228, cysteine 244, and cysteine 247. Residues 225–247 (CDNCYALIYKKALKLKLNVCEQC) form a C4-type zinc finger.

Belongs to the AccD/PCCB family. As to quaternary structure, acetyl-CoA carboxylase is a heterohexamer composed of biotin carboxyl carrier protein, biotin carboxylase and 2 subunits each of ACCase subunit alpha and ACCase plastid-coded subunit beta (accD). The cofactor is Zn(2+).

The protein localises to the plastid. It localises to the chloroplast stroma. The enzyme catalyses N(6)-carboxybiotinyl-L-lysyl-[protein] + acetyl-CoA = N(6)-biotinyl-L-lysyl-[protein] + malonyl-CoA. It functions in the pathway lipid metabolism; malonyl-CoA biosynthesis; malonyl-CoA from acetyl-CoA: step 1/1. In terms of biological role, component of the acetyl coenzyme A carboxylase (ACC) complex. Biotin carboxylase (BC) catalyzes the carboxylation of biotin on its carrier protein (BCCP) and then the CO(2) group is transferred by the transcarboxylase to acetyl-CoA to form malonyl-CoA. The chain is Acetyl-coenzyme A carboxylase carboxyl transferase subunit beta, chloroplastic from Aethionema grandiflorum (Persian stone-cress).